The sequence spans 489 residues: GTPase Der (489 aa).

2 EngA-type G domains span residues 3–166 (PVIA…PKDE) and 195–368 (IKIA…KSAV). Residues 9 to 16 (GRPNVGKS), 56 to 60 (DTGGI), 118 to 121 (NKID), 201 to 208 (GRPNVGKS), 248 to 252 (DTAGV), and 313 to 316 (NKWD) contribute to the GTP site. The KH-like domain maps to 369 to 453 (TRWPTSRLTQ…PIRIEFKGGE (85 aa)). The segment at 451-489 (GGENPYEGNKNTLTDRQVNKKRRMMSHHKKADKKRRDKR) is disordered. Basic residues predominate over residues 469–489 (NKKRRMMSHHKKADKKRRDKR).

Belongs to the TRAFAC class TrmE-Era-EngA-EngB-Septin-like GTPase superfamily. EngA (Der) GTPase family. As to quaternary structure, associates with the 50S ribosomal subunit.

Functionally, GTPase that plays an essential role in the late steps of ribosome biogenesis. The protein is GTPase Der of Pseudomonas syringae pv. tomato (strain ATCC BAA-871 / DC3000).